We begin with the raw amino-acid sequence, 184 residues long: Protein DMP2 (184 aa).

The next 4 helical transmembrane spans lie at 19-39 (LIKLLPTGTVFLFQFLNPVLT), 45-65 (LLINKYLTGVLIVICAFSCCF), 105-125 (VGDFVHAFFSLIVFSVISLLD), and 142-162 (IFLMVLPPVIGVISGAVFTVF).

This sequence belongs to the plant DMP1 protein family. In terms of tissue distribution, expressed constitutively in leaves, stems, flowers, siliques and roots.

Its subcellular location is the endoplasmic reticulum membrane. The protein resides in the vacuole membrane. In terms of biological role, involved in membrane remodeling. This chain is Protein DMP2, found in Arabidopsis thaliana (Mouse-ear cress).